The following is an 896-amino-acid chain: UPF0182 protein GM21_2279 (896 aa).

The next 7 helical transmembrane spans lie at 6-26 (MTFILVAIAVIFPFIGYLLSF), 46-66 (VYAQTGAGLIFGLLLFAFLQL), 99-119 (LVRPVGILISLVLAFLAGNWG), 158-180 (LLKSFAGFMVLAASVLSAAAYYV), 201-221 (LAVLVGLFGLVVAAGFYLESF), 245-265 (TLRILTFLTPVAGVVLALGIW), and 271-291 (LALGPPVVIVALYLVGVRVYP).

Belongs to the UPF0182 family.

The protein localises to the cell membrane. The chain is UPF0182 protein GM21_2279 from Geobacter sp. (strain M21).